The following is a 183-amino-acid chain: Lipid droplet coating protein mpl1 (183 aa).

Belongs to the perilipin family.

It is found in the lipid droplet. Lipid droplet coating protein that regulates lipid metabolism, appressorial turgor pressure, and virulence. Appressorial turgor pressure is important for breaching the insect cuticle during infection. The chain is Lipid droplet coating protein mpl1 from Metarhizium robertsii (strain ARSEF 23 / ATCC MYA-3075) (Metarhizium anisopliae (strain ARSEF 23)).